A 298-amino-acid chain; its full sequence is Diphthine methyl ester synthase (298 aa).

Residues leucine 9, aspartate 85, glycine 88, 113-114 (SV), leucine 164, leucine 222, and histidine 247 contribute to the S-adenosyl-L-methionine site.

It belongs to the diphthine synthase family.

The protein localises to the cytoplasm. It catalyses the reaction 2-[(3S)-amino-3-carboxypropyl]-L-histidyl-[translation elongation factor 2] + 4 S-adenosyl-L-methionine = diphthine methyl ester-[translation elongation factor 2] + 4 S-adenosyl-L-homocysteine + 3 H(+). Its pathway is protein modification; peptidyl-diphthamide biosynthesis. Its function is as follows. S-adenosyl-L-methionine-dependent methyltransferase that catalyzes four methylations of the modified target histidine residue in translation elongation factor 2 (EF-2), to form an intermediate called diphthine methyl ester. The four successive methylation reactions represent the second step of diphthamide biosynthesis. The chain is Diphthine methyl ester synthase (DPH5) from Eremothecium gossypii (strain ATCC 10895 / CBS 109.51 / FGSC 9923 / NRRL Y-1056) (Yeast).